We begin with the raw amino-acid sequence, 224 residues long: UPF0173 metal-dependent hydrolase EAT1b_0495 (224 aa).

The protein belongs to the UPF0173 family.

This is UPF0173 metal-dependent hydrolase EAT1b_0495 from Exiguobacterium sp. (strain ATCC BAA-1283 / AT1b).